A 272-amino-acid polypeptide reads, in one-letter code: tRNA pseudouridine synthase A (272 aa).

Asp-52 serves as the catalytic Nucleophile. Residue Tyr-110 coordinates substrate.

This sequence belongs to the tRNA pseudouridine synthase TruA family. Homodimer.

The catalysed reaction is uridine(38/39/40) in tRNA = pseudouridine(38/39/40) in tRNA. Functionally, formation of pseudouridine at positions 38, 39 and 40 in the anticodon stem and loop of transfer RNAs. The sequence is that of tRNA pseudouridine synthase A from Cupriavidus necator (strain ATCC 17699 / DSM 428 / KCTC 22496 / NCIMB 10442 / H16 / Stanier 337) (Ralstonia eutropha).